The following is a 258-amino-acid chain: Acyl-[acyl-carrier-protein]--UDP-N-acetylglucosamine O-acyltransferase (258 aa).

Belongs to the transferase hexapeptide repeat family. LpxA subfamily. Homotrimer.

It localises to the cytoplasm. It catalyses the reaction a (3R)-hydroxyacyl-[ACP] + UDP-N-acetyl-alpha-D-glucosamine = a UDP-3-O-[(3R)-3-hydroxyacyl]-N-acetyl-alpha-D-glucosamine + holo-[ACP]. It functions in the pathway glycolipid biosynthesis; lipid IV(A) biosynthesis; lipid IV(A) from (3R)-3-hydroxytetradecanoyl-[acyl-carrier-protein] and UDP-N-acetyl-alpha-D-glucosamine: step 1/6. Functionally, involved in the biosynthesis of lipid A, a phosphorylated glycolipid that anchors the lipopolysaccharide to the outer membrane of the cell. This is Acyl-[acyl-carrier-protein]--UDP-N-acetylglucosamine O-acyltransferase from Ectopseudomonas mendocina (strain ymp) (Pseudomonas mendocina).